The following is a 78-amino-acid chain: Large ribosomal subunit protein bL28 (78 aa).

It belongs to the bacterial ribosomal protein bL28 family.

This chain is Large ribosomal subunit protein bL28, found in Prochlorococcus marinus (strain AS9601).